The primary structure comprises 271 residues: Glutamate racemase (271 aa).

Substrate-binding positions include 10–11 (DS) and 42–43 (YG). Cysteine 73 functions as the Proton donor/acceptor in the catalytic mechanism. 74–75 (NT) contributes to the substrate binding site. The active-site Proton donor/acceptor is cysteine 183. 184 to 185 (TH) provides a ligand contact to substrate.

The protein belongs to the aspartate/glutamate racemases family.

It catalyses the reaction L-glutamate = D-glutamate. Its pathway is cell wall biogenesis; peptidoglycan biosynthesis. In terms of biological role, provides the (R)-glutamate required for cell wall biosynthesis. This is Glutamate racemase from Streptococcus thermophilus (strain ATCC BAA-250 / LMG 18311).